A 314-amino-acid chain; its full sequence is Olfactory receptor 5P6 (314 aa).

At M1 to V28 the chain is on the extracellular side. N8 carries an N-linked (GlcNAc...) asparagine glycan. A helical transmembrane segment spans residues I29 to I49. At L50–Q57 the chain is on the cytoplasmic side. Residues L58–S78 traverse the membrane as a helical segment. Over S79–I102 the chain is Extracellular. C100 and C192 are disulfide-bonded. A helical transmembrane segment spans residues Q103–Y123. At D124 to S136 the chain is on the cytoplasmic side. A helical membrane pass occupies residues T137 to L157. The Extracellular portion of the chain corresponds to N158–A199. Residues T200–S220 traverse the membrane as a helical segment. The Cytoplasmic segment spans residues Y221 to A240. The helical transmembrane segment at F241–I261 threads the bilayer. Residues Y262–N274 are Extracellular-facing. A helical transmembrane segment spans residues K275–L295. At R296–S314 the chain is on the cytoplasmic side.

It belongs to the G-protein coupled receptor 1 family.

It is found in the cell membrane. In terms of biological role, potential odorant receptor. The protein is Olfactory receptor 5P6 of Mus musculus (Mouse).